The sequence spans 262 residues: Acyl-coenzyme A diphosphatase FITM2 (262 aa).

The Cytoplasmic segment spans residues 1–23 (MEHLERCAWVLRGTLVRSAVRKY). The chain crosses the membrane as a helical span at residues 24 to 44 (LPWALAASMLAGSLLKELSPL). Over 45–57 (PESYLSNKRNVLN) the chain is Lumenal. The helical transmembrane segment at 58–78 (VYFVKVAWAWTFCLLLPFIAL) threads the bilayer. Residues 79 to 93 (TNYHLTGKAGLVLRR) are Cytoplasmic-facing. The helical transmembrane segment at 94–114 (LSTLLVGTAIWYVCTAIFSNI) threads the bilayer. The Lumenal segment spans residues 115-145 (EHYTGSCYQSPALEGERKEHQSKQQCHGEGG). The chain crosses the membrane as a helical span at residues 146 to 166 (FWHGFDISGHSFLLTFCALMI). Residue His-155 is part of the active site. Topologically, residues 167–190 (VEEMAVLHEVKTDRNHCLHAAITT) are cytoplasmic. A helical membrane pass occupies residues 191-211 (LVVALGFLTFIWVWMFLCTAV). The Lumenal segment spans residues 212-218 (YFHNLSQ). Residue His-214 is part of the active site. A helical membrane pass occupies residues 219–239 (KVFGTLFGLLGWYGTYGCWYL). At 240-262 (KSFSPGLPPQSSSLNLKQDTYKK) the chain is on the cytoplasmic side.

It belongs to the FIT family. FIT2 subfamily.

The protein resides in the endoplasmic reticulum membrane. It catalyses the reaction an acyl-CoA + H2O = an acyl-4'-phosphopantetheine + adenosine 3',5'-bisphosphate + 2 H(+). The enzyme catalyses (9Z)-octadecenoyl-CoA + H2O = S-(9Z-octadecenoyl)-4'-phosphopantetheine + adenosine 3',5'-bisphosphate + 2 H(+). It carries out the reaction (5Z,8Z,11Z,14Z)-eicosatetraenoyl-CoA + H2O = S-(5Z,8Z,11Z,14Z-eicosatetraenoyl)-4'-phosphopantetheine + adenosine 3',5'-bisphosphate + 2 H(+). The catalysed reaction is hexadecanoyl-CoA + H2O = S-hexadecanoyl-4'-phosphopantetheine + adenosine 3',5'-bisphosphate + 2 H(+). Its function is as follows. Fatty acyl-coenzyme A (CoA) diphosphatase that hydrolyzes fatty acyl-CoA to yield acyl-4'-phosphopantetheine and adenosine 3',5'-bisphosphate. Preferentially hydrolyzes unsaturated long-chain acyl-CoA substrates such as oleoyl-CoA/(9Z)-octadecenoyl-CoA and arachidonoyl-CoA/(5Z,8Z,11Z,14Z)-eicosatetraenoyl-CoA in the endoplasmic reticulum (ER) lumen. This catalytic activity is required for maintaining ER structure and for lipid droplets (LDs) biogenesis, which are lipid storage organelles involved in maintaining lipid and energy homeostasis. Directly binds to diacylglycerol (DAGs) and triacylglycerol, which is also important for LD biogenesis. May support directional budding of nacent LDs from the ER into the cytosol by reducing DAG levels at sites of LD formation. Plays a role in the regulation of cell morphology and cytoskeletal organization. This Bos taurus (Bovine) protein is Acyl-coenzyme A diphosphatase FITM2.